Here is a 448-residue protein sequence, read N- to C-terminus: B box and SPRY domain-containing protein (448 aa).

Positions 1–18 (MSSDVSGTESGSESGPES) are enriched in low complexity. Residues 1-58 (MSSDVSGTESGSESGPESVPEPVPEPGPEPESEPGPGPAPGPGPGPAPGPGPGLGREP) are disordered. Over residues 19–51 (VPEPVPEPGPEPESEPGPGPAPGPGPGPAPGPG) the composition is skewed to pro residues. Residues 63–111 (QPCQLCPEHGKPLSWFCLSERRPVCATCAGFGGRCHRHRIRRAEEHAEE) form a B box-type zinc finger. Residues 257 to 448 (SPLLTQLWAT…VADQVISIVC (192 aa)) form the B30.2/SPRY domain.

In terms of assembly, interacts with TRPV5 and TRPV6. Interacts with YWHAZ/14-3-3 protein zeta. Predominantly expressed in testis. Expressed in brain at low levels.

Its subcellular location is the cytoplasm. It is found in the membrane. May regulate epithelial calcium transport by inhibiting TRPV5 activity. The polypeptide is B box and SPRY domain-containing protein (Bspry) (Rattus norvegicus (Rat)).